The primary structure comprises 55 residues: Preprotein translocase subunit SecG (55 aa).

At 1–31 the chain is on the cytoplasmic side; the sequence is MPKNNTNENFQSGAGLIRYFNEEEIKGPALD. A helical membrane pass occupies residues 32–51; the sequence is PKLIIYIGIAMAVIVELAKI. Topologically, residues 52–55 are extracellular; it reads FWPV.

Belongs to the SEC61-beta family. As to quaternary structure, component of the protein translocase complex. Heterotrimer consisting of alpha (SecY), beta (SecG) and gamma (SecE) subunits. Can form oligomers of the heterotrimer.

The protein localises to the cell membrane. In terms of biological role, involved in protein export. The function of the beta subunit is unknown, but it may be involved in stabilization of the trimeric complex. The chain is Preprotein translocase subunit SecG from Picrophilus torridus (strain ATCC 700027 / DSM 9790 / JCM 10055 / NBRC 100828 / KAW 2/3).